The chain runs to 434 residues: UDP-N-acetylmuramate--L-alanine ligase (434 aa).

Residue 110-116 (GAHGKTS) participates in ATP binding.

It belongs to the MurCDEF family.

Its subcellular location is the cytoplasm. It catalyses the reaction UDP-N-acetyl-alpha-D-muramate + L-alanine + ATP = UDP-N-acetyl-alpha-D-muramoyl-L-alanine + ADP + phosphate + H(+). It participates in cell wall biogenesis; peptidoglycan biosynthesis. Its function is as follows. Cell wall formation. The polypeptide is UDP-N-acetylmuramate--L-alanine ligase (Limosilactobacillus reuteri (strain DSM 20016) (Lactobacillus reuteri)).